Consider the following 210-residue polypeptide: Outer-membrane lipoprotein LolB (210 aa).

Residues 1–19 (MNHLKSFFTALVAGFILTA) form the signal peptide. A lipid anchor (N-palmitoyl cysteine) is attached at cysteine 20. A lipid anchor (S-diacylglycerol cysteine) is attached at cysteine 20.

This sequence belongs to the LolB family. Monomer.

Its subcellular location is the cell outer membrane. Its function is as follows. Plays a critical role in the incorporation of lipoproteins in the outer membrane after they are released by the LolA protein. This Mannheimia succiniciproducens (strain KCTC 0769BP / MBEL55E) protein is Outer-membrane lipoprotein LolB.